Reading from the N-terminus, the 248-residue chain is Transcription factor MYBC1 (248 aa).

A DNA-binding region (myb-like GARP) is located at residues 102–161 (TLKRPRLVWTPQLHKRFVDAVGHLGIKNAVPKTIMQLMSVEGLTRENVASHLQKYRLYLR).

Expressed in roots, leaves, stems, petioles, filaments, stigma, pedicels, sepals, anthers, petals, and siliques.

It is found in the nucleus. Functionally, probable transcription factor that acts as a negative regulator of freezing tolerance via a CBF-independent pathway. This chain is Transcription factor MYBC1, found in Arabidopsis thaliana (Mouse-ear cress).